The sequence spans 95 residues: MRKYEIMYIIRPNLDDEARQAVVDRFNNILKENGAEITNVTDWGKRRLAYEIKKYRDGHYMILNVVSEPKAVQEFDRLARISDDIIRHIVVKEEK.

Belongs to the bacterial ribosomal protein bS6 family.

In terms of biological role, binds together with bS18 to 16S ribosomal RNA. This is Small ribosomal subunit protein bS6 from Geobacillus sp. (strain WCH70).